The chain runs to 120 residues: NAD(P)H-quinone oxidoreductase subunit 3, chloroplastic (120 aa).

3 helical membrane passes run 11–31, 65–85, and 89–109; these read VVFF…SKLI, FALI…WAIV, and LGIT…IGLV.

It belongs to the complex I subunit 3 family. In terms of assembly, NDH is composed of at least 16 different subunits, 5 of which are encoded in the nucleus.

Its subcellular location is the plastid. It is found in the chloroplast thylakoid membrane. It catalyses the reaction a plastoquinone + NADH + (n+1) H(+)(in) = a plastoquinol + NAD(+) + n H(+)(out). The catalysed reaction is a plastoquinone + NADPH + (n+1) H(+)(in) = a plastoquinol + NADP(+) + n H(+)(out). Its function is as follows. NDH shuttles electrons from NAD(P)H:plastoquinone, via FMN and iron-sulfur (Fe-S) centers, to quinones in the photosynthetic chain and possibly in a chloroplast respiratory chain. The immediate electron acceptor for the enzyme in this species is believed to be plastoquinone. Couples the redox reaction to proton translocation, and thus conserves the redox energy in a proton gradient. This Mesostigma viride (Green alga) protein is NAD(P)H-quinone oxidoreductase subunit 3, chloroplastic.